A 261-amino-acid polypeptide reads, in one-letter code: Ribonuclease HII (261 aa).

The RNase H type-2 domain occupies Lys-71–Ser-259. Positions 77, 78, and 169 each coordinate a divalent metal cation.

The protein belongs to the RNase HII family. It depends on Mn(2+) as a cofactor. Mg(2+) is required as a cofactor.

It localises to the cytoplasm. It catalyses the reaction Endonucleolytic cleavage to 5'-phosphomonoester.. Endonuclease that specifically degrades the RNA of RNA-DNA hybrids. This chain is Ribonuclease HII, found in Listeria monocytogenes serotype 4a (strain HCC23).